Here is a 339-residue protein sequence, read N- to C-terminus: Casein kinase II subunit alpha' (339 aa).

Positions 50 to 334 (YEIINKIGRG…AKEAMDHKFF (285 aa)) constitute a Protein kinase domain. Residues 56–64 (IGRGKYSEV) and Lys79 each bind ATP. Catalysis depends on Asp167, which acts as the Proton acceptor.

The protein belongs to the protein kinase superfamily. Ser/Thr protein kinase family. CK2 subfamily. Tetramer composed of an alpha chain, an alpha', one beta chain and one beta' chain. Interacts with FACT subunits POB3 and SPT16. Interacts with NAP1. Interacts with YTA7.

The catalysed reaction is L-seryl-[protein] + ATP = O-phospho-L-seryl-[protein] + ADP + H(+). The enzyme catalyses L-threonyl-[protein] + ATP = O-phospho-L-threonyl-[protein] + ADP + H(+). Functionally, catalytic subunit of a constitutively active serine/threonine-protein kinase complex that phosphorylates a large number of substrates containing acidic residues C-terminal to the phosphorylated serine or threonine. Phosphorylates YTA7 during S-phase to promote transcription of histones. The sequence is that of Casein kinase II subunit alpha' from Saccharomyces cerevisiae (strain ATCC 204508 / S288c) (Baker's yeast).